A 159-amino-acid polypeptide reads, in one-letter code: SsrA-binding protein (159 aa).

The protein belongs to the SmpB family.

It localises to the cytoplasm. In terms of biological role, required for rescue of stalled ribosomes mediated by trans-translation. Binds to transfer-messenger RNA (tmRNA), required for stable association of tmRNA with ribosomes. tmRNA and SmpB together mimic tRNA shape, replacing the anticodon stem-loop with SmpB. tmRNA is encoded by the ssrA gene; the 2 termini fold to resemble tRNA(Ala) and it encodes a 'tag peptide', a short internal open reading frame. During trans-translation Ala-aminoacylated tmRNA acts like a tRNA, entering the A-site of stalled ribosomes, displacing the stalled mRNA. The ribosome then switches to translate the ORF on the tmRNA; the nascent peptide is terminated with the 'tag peptide' encoded by the tmRNA and targeted for degradation. The ribosome is freed to recommence translation, which seems to be the essential function of trans-translation. The polypeptide is SsrA-binding protein (Mycobacteroides abscessus (strain ATCC 19977 / DSM 44196 / CCUG 20993 / CIP 104536 / JCM 13569 / NCTC 13031 / TMC 1543 / L948) (Mycobacterium abscessus)).